We begin with the raw amino-acid sequence, 231 residues long: Mediator of RNA polymerase II transcription subunit 18 (231 aa).

Positions 191–218 form a coiled coil; that stretch reads HLTDIEALNKAVKELEKVKTELHGLMNL.

It belongs to the Mediator complex subunit 18 family. In terms of assembly, component of the Mediator complex.

Its subcellular location is the nucleus. Component of the Mediator complex, a coactivator involved in the regulated transcription of nearly all RNA polymerase II-dependent genes. Mediator functions as a bridge to convey information from gene-specific regulatory proteins to the basal RNA polymerase II transcription machinery. Mediator is recruited to promoters by direct interactions with regulatory proteins and serves as a scaffold for the assembly of a functional preinitiation complex with RNA polymerase II and the general transcription factors. The sequence is that of Mediator of RNA polymerase II transcription subunit 18 (SRB5) from Yarrowia lipolytica (strain CLIB 122 / E 150) (Yeast).